A 624-amino-acid chain; its full sequence is ERAD-associated E3 ubiquitin-protein ligase ASI1 (624 aa).

Residues 1-69 (MNSSTSSENV…SEEIPPTLRS (69 aa)) lie on the Perinuclear space side of the membrane. Asn-2, Asn-19, and Asn-29 each carry an N-linked (GlcNAc...) asparagine glycan. Residues 70–90 (VFDTIGFFFSPYAIFCFVIAI) traverse the membrane as a helical segment. Residues 91-116 (VLNRFVVFYAVLNNGSRRTLPLWLSN) lie on the Nuclear side of the membrane. The helical transmembrane segment at 117 to 137 (VFHVSAVVVLAMVSLGPLTLG) threads the bilayer. Topologically, residues 138–152 (KDFKILGDPAFAQEK) are perinuclear space. A helical transmembrane segment spans residues 153-173 (FLLNIFYAFAYSYCVETIFTI). Over 174-209 (MRNSSPLEGTDYSLFELSIQFYTMTNNNTKFLDSPD) the chain is Nuclear. A helical membrane pass occupies residues 210–230 (YIIDCSMAILSRILIHLVEIF). At 231–273 (RLRNYRLLFSTIMNLCHICYLGIRVKQGGWKSLPFSVKFRHFP) the chain is on the perinuclear space side. A helical transmembrane segment spans residues 274-294 (KLFSVSIICLSLLIFKLSCLI). Residues 295 to 624 (RWDPFGKSRN…CKVHPVSDSK (330 aa)) lie on the Nuclear side of the membrane. A disordered region spans residues 467–490 (TSDDEYSEDYEPSEVESLGDSDEE). Positions 468–490 (SDDEYSEDYEPSEVESLGDSDEE) are enriched in acidic residues. Residues 568–608 (CAVCKVNERNTVLWPCRCFAICEDCRISLGLRGFSTCVCCR) form an RING-type; atypical zinc finger.

As to quaternary structure, component of the Asi complex, which contains ASI1, ASI2 and ASI3. Interacts directly with ASI3. Post-translationally, glycosylation is not required for ASI1 function.

The protein localises to the nucleus inner membrane. The enzyme catalyses S-ubiquitinyl-[E2 ubiquitin-conjugating enzyme]-L-cysteine + [acceptor protein]-L-lysine = [E2 ubiquitin-conjugating enzyme]-L-cysteine + N(6)-ubiquitinyl-[acceptor protein]-L-lysine.. Functionally, E3 ubiquitin-protein ligase which transfers ubiquitin to substrates promoting their degradation. Part of the nuclear inner membrane (INM)-specific branch of the ER-associated degradation (ERAD) pathway, required for the elimination of misfolded proteins in the INM, a specialized ER subdomain. Required for ERG11 degradation. Negative regulator of SPS-sensor signaling. Together with ASI2 and ASI3, prevents the unprocessed precursor forms of STP1 and STP2 that escape cytoplasmic anchoring from inducing SPS-sensor-regulated genes in the absence of inducing signals. Controls amino acid permease (AAP) gene expression in response to amino acid availability, a process mediated by the transcription factors STP1 and STP1. In Saccharomyces cerevisiae (strain ATCC 204508 / S288c) (Baker's yeast), this protein is ERAD-associated E3 ubiquitin-protein ligase ASI1 (ASI1).